Reading from the N-terminus, the 524-residue chain is Cytochrome P450 4F12 (524 aa).

The next 2 membrane-spanning stretches (helical) occupy residues 19 to 39 (WLLL…AWTY) and 87 to 107 (GFTV…PDTI). Cys468 lines the heme pocket.

The protein belongs to the cytochrome P450 family. It depends on heme as a cofactor. As to expression, expressed in small intestine, liver, colon and heart.

Its subcellular location is the endoplasmic reticulum membrane. The protein resides in the microsome membrane. The catalysed reaction is an organic molecule + reduced [NADPH--hemoprotein reductase] + O2 = an alcohol + oxidized [NADPH--hemoprotein reductase] + H2O + H(+). It carries out the reaction (5Z,8Z,11Z,14Z)-eicosatetraenoate + reduced [NADPH--hemoprotein reductase] + O2 = 18-hydroxy-(5Z,8Z,11Z,14Z)-eicosatetraenoate + oxidized [NADPH--hemoprotein reductase] + H2O + H(+). It catalyses the reaction (7Z,10Z,13Z,16Z,19Z)-docosapentaenoate + reduced [NADPH--hemoprotein reductase] + O2 = 10,11-epoxy-(7Z,13Z,16Z,19Z)-docosatetraenoate + oxidized [NADPH--hemoprotein reductase] + H2O + H(+). The enzyme catalyses (7Z,10Z,13Z,16Z,19Z)-docosapentaenoate + reduced [NADPH--hemoprotein reductase] + O2 = 13,14-epoxy-(7Z,10Z,16Z,19Z)-docosatetraenoate + oxidized [NADPH--hemoprotein reductase] + H2O + H(+). The catalysed reaction is (7Z,10Z,13Z,16Z,19Z)-docosapentaenoate + reduced [NADPH--hemoprotein reductase] + O2 = 16,17-epoxy-(7Z,10Z,13Z,19Z)-docosatetraenoate + oxidized [NADPH--hemoprotein reductase] + H2O + H(+). It carries out the reaction (7Z,10Z,13Z,16Z,19Z)-docosapentaenoate + reduced [NADPH--hemoprotein reductase] + O2 = 19,20-epoxy-(7Z,10Z,13Z,16Z)-docosatetraenoate + oxidized [NADPH--hemoprotein reductase] + H2O + H(+). It catalyses the reaction (4Z,7Z,10Z,13Z,16Z,19Z)-docosahexaenoate + reduced [NADPH--hemoprotein reductase] + O2 = 10,11-epoxy-(4Z,7Z,13Z,16Z,19Z)-docosapentaenoate + oxidized [NADPH--hemoprotein reductase] + H2O + H(+). The enzyme catalyses (4Z,7Z,10Z,13Z,16Z,19Z)-docosahexaenoate + reduced [NADPH--hemoprotein reductase] + O2 = 13,14-epoxy-(4Z,7Z,10Z,16Z,19Z)-docosapentaenoate + oxidized [NADPH--hemoprotein reductase] + H2O + H(+). The catalysed reaction is (4Z,7Z,10Z,13Z,16Z,19Z)-docosahexaenoate + reduced [NADPH--hemoprotein reductase] + O2 = 16,17-epoxy-(4Z,7Z,10Z,13Z,19Z)-docosapentaenoate + oxidized [NADPH--hemoprotein reductase] + H2O + H(+). It carries out the reaction (4Z,7Z,10Z,13Z,16Z,19Z)-docosahexaenoate + reduced [NADPH--hemoprotein reductase] + O2 = 19,20-epoxy-(4Z,7Z,10Z,13Z,16Z)-docosapentaenoate + oxidized [NADPH--hemoprotein reductase] + H2O + H(+). Its pathway is lipid metabolism; arachidonate metabolism. Functionally, a cytochrome P450 monooxygenase involved in the metabolism of endogenous polyunsaturated fatty acids (PUFAs). Mechanistically, uses molecular oxygen inserting one oxygen atom into a substrate, and reducing the second into a water molecule, with two electrons provided by NADPH via cytochrome P450 reductase (CPR; NADPH-ferrihemoprotein reductase). Catalyzes the hydroxylation of carbon hydrogen bonds, with preference for omega-2 position. Metabolizes (5Z,8Z,11Z,14Z)-eicosatetraenoic acid (arachidonate) toward 18-hydroxy arachidonate. Catalyzes the epoxidation of double bonds of PUFAs such as docosapentaenoic and docosahexaenoic acids. Has low omega-hydroxylase activity toward leukotriene B4 and arachidonate. Involved in the metabolism of xenobiotics. Catalyzes the hydroxylation of the antihistamine drug ebastine. The sequence is that of Cytochrome P450 4F12 from Homo sapiens (Human).